The sequence spans 613 residues: Dihydroxy-acid dehydratase (613 aa).

A Mg(2+)-binding site is contributed by D81. C122 provides a ligand contact to [2Fe-2S] cluster. D123 and K124 together coordinate Mg(2+). K124 is modified (N6-carboxylysine). C195 is a binding site for [2Fe-2S] cluster. E491 is a Mg(2+) binding site. The active-site Proton acceptor is S517.

Belongs to the IlvD/Edd family. Homodimer. The cofactor is [2Fe-2S] cluster. Requires Mg(2+) as cofactor.

The catalysed reaction is (2R)-2,3-dihydroxy-3-methylbutanoate = 3-methyl-2-oxobutanoate + H2O. It catalyses the reaction (2R,3R)-2,3-dihydroxy-3-methylpentanoate = (S)-3-methyl-2-oxopentanoate + H2O. Its pathway is amino-acid biosynthesis; L-isoleucine biosynthesis; L-isoleucine from 2-oxobutanoate: step 3/4. The protein operates within amino-acid biosynthesis; L-valine biosynthesis; L-valine from pyruvate: step 3/4. Functions in the biosynthesis of branched-chain amino acids. Catalyzes the dehydration of (2R,3R)-2,3-dihydroxy-3-methylpentanoate (2,3-dihydroxy-3-methylvalerate) into 2-oxo-3-methylpentanoate (2-oxo-3-methylvalerate) and of (2R)-2,3-dihydroxy-3-methylbutanoate (2,3-dihydroxyisovalerate) into 2-oxo-3-methylbutanoate (2-oxoisovalerate), the penultimate precursor to L-isoleucine and L-valine, respectively. The chain is Dihydroxy-acid dehydratase from Vibrio vulnificus (strain CMCP6).